The following is a 453-amino-acid chain: uncharacterized protein (453 aa).

Positions 74, 80, 83, and 162 each coordinate [4Fe-4S] cluster. S-adenosyl-L-methionine contacts are provided by Gln286, Tyr315, Glu336, and Asp384. Cys411 functions as the Nucleophile in the catalytic mechanism.

Belongs to the class I-like SAM-binding methyltransferase superfamily. RNA M5U methyltransferase family.

This is an uncharacterized protein from Staphylococcus aureus (strain MW2).